A 210-amino-acid chain; its full sequence is MVCGGFACSRNALCALNVVYMLVGFLLIGVAAWGKGLGVVSSIHIIGGVIAVGVFLLLIAVAGLVGAANHHQVLLFFYMIILGLVFIFQFGISCSCLAINRNTQADVINASWSVLSNSTRHELERSFDCCGLFNLTTLRLQDDTSCSAVCKTKSSTCQMCGERFLKHSDKALKILGGVGLFFSFTEILGVWLAMRFRNQKDPRANPSAFL.

Residues 1–12 (MVCGGFACSRNA) lie on the Cytoplasmic side of the membrane. Residues 13–33 (LCALNVVYMLVGFLLIGVAAW) traverse the membrane as a helical segment. Residues 34-44 (GKGLGVVSSIH) are Extracellular-facing. The chain crosses the membrane as a helical span at residues 45 to 65 (IIGGVIAVGVFLLLIAVAGLV). Over 66 to 72 (GAANHHQ) the chain is Cytoplasmic. Residues 73–93 (VLLFFYMIILGLVFIFQFGIS) form a helical membrane-spanning segment. Over 94–173 (CSCLAINRNT…FLKHSDKALK (80 aa)) the chain is Extracellular. Asn109, Asn117, and Asn134 each carry an N-linked (GlcNAc...) asparagine glycan. Residues 174-194 (ILGGVGLFFSFTEILGVWLAM) traverse the membrane as a helical segment. Topologically, residues 195 to 210 (RFRNQKDPRANPSAFL) are cytoplasmic.

Belongs to the tetraspanin (TM4SF) family.

It localises to the membrane. The chain is Tetraspanin-31 (Tspan31) from Mus musculus (Mouse).